Reading from the N-terminus, the 77-residue chain is Protein KleA (77 aa).

It to E.coli KleC (kcrB1).

The polypeptide is Protein KleA (kleA) (Escherichia coli).